A 498-amino-acid chain; its full sequence is ATP synthase subunit beta, chloroplastic (498 aa).

172-179 (GGAGVGKT) is a binding site for ATP.

Belongs to the ATPase alpha/beta chains family. F-type ATPases have 2 components, CF(1) - the catalytic core - and CF(0) - the membrane proton channel. CF(1) has five subunits: alpha(3), beta(3), gamma(1), delta(1), epsilon(1). CF(0) has four main subunits: a(1), b(1), b'(1) and c(9-12).

The protein localises to the plastid. It is found in the chloroplast thylakoid membrane. The catalysed reaction is ATP + H2O + 4 H(+)(in) = ADP + phosphate + 5 H(+)(out). Functionally, produces ATP from ADP in the presence of a proton gradient across the membrane. The catalytic sites are hosted primarily by the beta subunits. The polypeptide is ATP synthase subunit beta, chloroplastic (Populus tremuloides (Quaking aspen)).